We begin with the raw amino-acid sequence, 449 residues long: MNYKNKNLVSESGLTQKHLIHGDEELFQRELETIFARNWLFLTHDSLIPSPGDYVTAKMGVDEVIVSRQNDGSIRAFLNVCRHRGKTLVHAEAGNAKGFVCSYHGWGFGANGELQSVPFEKELYGEALDKKCMGLKEVARVESFHGFIYGCFDEEAPSLKDYMGDAGWYLEPMFKHSGGLELIGPPGKVIIKANWKAPAENFTGDAYHVGWTHASSLRSGQSVFSSLAGNAALPPEGAGLQMTSKYGSGMGVLWDGYSGVHSADLVPELMAFGGAKQERLNKEIGEVRARIYRSHLNCTVFPNNSFLTCSGVFKVWHPIDANTTEVWTYAMVEKDMPEDLKRRLVDAVQRTFGPAGFWESDDNDNMETVSQNAKKYQSRDGDLVSNLGFGGDVYGDEVYPGIVGKSAIGETSYRGFYRAYGAHISSSSWAEFEDVSKNWHTELAKTTDR.

The Rieske domain occupies 39-137 (WLFLTHDSLI…LDKKCMGLKE (99 aa)). Cys-81, His-83, Cys-101, and His-104 together coordinate [2Fe-2S] cluster. Fe cation-binding residues include His-208, His-213, and Asp-362.

The protein belongs to the bacterial ring-hydroxylating dioxygenase alpha subunit family. In terms of assembly, the naphthalene dioxygenase (NDO) multicomponent enzyme system is composed of an electron transfer component and a dioxygenase component (iron sulfur protein (ISP)). The electron transfer component is composed of a ferredoxin reductase (NdoR) and a ferredoxin (NdoA), and the dioxygenase component is formed of a heterohexamer (trimer of heterodimers) of three large alpha subunits (NdoB) and three small beta subunits (NdoC). The cofactor is [2Fe-2S] cluster. Requires Fe(2+) as cofactor.

It carries out the reaction naphthalene + NADH + O2 + H(+) = (1R,2S)-1,2-dihydronaphthalene-1,2-diol + NAD(+). The protein operates within aromatic compound metabolism; naphthalene degradation. Its function is as follows. Component of the naphthalene dioxygenase (NDO) multicomponent enzyme system which catalyzes the incorporation of both atoms of molecular oxygen into naphthalene to form cis-(1R,2S)-dihydroxy-1,2-dihydronaphthalene. The alpha subunit has a catalytic role in the holoenzyme. This chain is Naphthalene 1,2-dioxygenase system, large oxygenase component, found in Pseudomonas aeruginosa.